Consider the following 277-residue polypeptide: Orotidine 5'-phosphate decarboxylase (277 aa).

Residues aspartate 40, 62–64 (KTH), 93–102 (DRKFIDIGNT), tyrosine 229, and arginine 247 each bind substrate. The active-site Proton donor is the lysine 95.

Belongs to the OMP decarboxylase family.

It carries out the reaction orotidine 5'-phosphate + H(+) = UMP + CO2. Its pathway is pyrimidine metabolism; UMP biosynthesis via de novo pathway; UMP from orotate: step 2/2. The sequence is that of Orotidine 5'-phosphate decarboxylase (pyrG) from Aspergillus awamori (Black koji mold).